The primary structure comprises 316 residues: Beta-ketoacyl-[acyl-carrier-protein] synthase III (316 aa).

Active-site residues include C112 and H243. Residues 244 to 248 (QANLR) are ACP-binding. N273 is a catalytic residue.

The protein belongs to the thiolase-like superfamily. FabH family. Homodimer.

It localises to the cytoplasm. It carries out the reaction malonyl-[ACP] + acetyl-CoA + H(+) = 3-oxobutanoyl-[ACP] + CO2 + CoA. It participates in lipid metabolism; fatty acid biosynthesis. In terms of biological role, catalyzes the condensation reaction of fatty acid synthesis by the addition to an acyl acceptor of two carbons from malonyl-ACP. Catalyzes the first condensation reaction which initiates fatty acid synthesis and may therefore play a role in governing the total rate of fatty acid production. Possesses both acetoacetyl-ACP synthase and acetyl transacylase activities. Its substrate specificity determines the biosynthesis of branched-chain and/or straight-chain of fatty acids. This chain is Beta-ketoacyl-[acyl-carrier-protein] synthase III, found in Actinobacillus succinogenes (strain ATCC 55618 / DSM 22257 / CCUG 43843 / 130Z).